We begin with the raw amino-acid sequence, 748 residues long: Cysteine--tRNA ligase, cytoplasmic (748 aa).

The disordered stretch occupies residues 1–25 (MAAAPAEQGKGKRVQPPWSPPEGTK). Cys55 is a Zn(2+) binding site. Gly56 is a binding site for L-cysteine. The 'HIGH' region signature appears at 57 to 67 (PTVYDASHMGH). An L-cysteine-binding site is contributed by Thr96. Residues 101–104 (KIIK) carry the 'KIIK' region motif. Zn(2+) is bound by residues Cys348, His373, and Glu377. His373 contributes to the L-cysteine binding site. The 'KMSKS' region signature appears at 406-410 (KMSKS). Residue Lys409 coordinates ATP. Basic and acidic residues-rich tracts occupy residues 656-679 (KIEE…EAAK) and 686-717 (PPHE…KELS). Residues 656–719 (KIEEEKKRKK…DTEGKELSKG (64 aa)) are disordered.

Belongs to the class-I aminoacyl-tRNA synthetase family. In terms of assembly, homodimer. The cofactor is Zn(2+).

Its subcellular location is the cytoplasm. It carries out the reaction tRNA(Cys) + L-cysteine + ATP = L-cysteinyl-tRNA(Cys) + AMP + diphosphate. Functionally, catalyzes the ATP-dependent ligation of cysteine to tRNA(Cys). The protein is Cysteine--tRNA ligase, cytoplasmic (CARS1) of Gallus gallus (Chicken).